A 224-amino-acid polypeptide reads, in one-letter code: Orotate phosphoribosyltransferase (224 aa).

5-phospho-alpha-D-ribose 1-diphosphate is bound at residue Lys29. Residue 37–38 (FF) coordinates orotate. 5-phospho-alpha-D-ribose 1-diphosphate is bound by residues 75–76 (YK), Arg105, Lys106, Lys109, His111, and 130–138 (DDVITAGTS). Residues Thr134 and Arg162 each contribute to the orotate site.

It belongs to the purine/pyrimidine phosphoribosyltransferase family. PyrE subfamily. As to quaternary structure, homodimer. The cofactor is Mg(2+).

The catalysed reaction is orotidine 5'-phosphate + diphosphate = orotate + 5-phospho-alpha-D-ribose 1-diphosphate. It functions in the pathway pyrimidine metabolism; UMP biosynthesis via de novo pathway; UMP from orotate: step 1/2. Catalyzes the transfer of a ribosyl phosphate group from 5-phosphoribose 1-diphosphate to orotate, leading to the formation of orotidine monophosphate (OMP). This is Orotate phosphoribosyltransferase from Bordetella pertussis (strain Tohama I / ATCC BAA-589 / NCTC 13251).